The chain runs to 112 residues: Glutaredoxin-C6 (112 aa).

The region spanning 3–103 is the Glutaredoxin domain; sequence LAKAKETVAS…PLLTEAGAIA (101 aa). Cysteines 23 and 26 form a disulfide.

This sequence belongs to the glutaredoxin family. CPYC subfamily. The N-terminus is blocked. Expressed in aleurone layer.

It localises to the cytoplasm. Functionally, has a glutathione-disulfide oxidoreductase activity in the presence of NADPH and glutathione reductase. Reduces low molecular weight disulfides and proteins. Possesses thioltransferase, dehydroascorbate reductase and GSH-dependent peroxidase activities in vitro. The protein is Glutaredoxin-C6 (GRXC6) of Oryza sativa subsp. japonica (Rice).